The following is a 207-amino-acid chain: N-(5'-phosphoribosyl)anthranilate isomerase (207 aa).

It belongs to the TrpF family.

The enzyme catalyses N-(5-phospho-beta-D-ribosyl)anthranilate = 1-(2-carboxyphenylamino)-1-deoxy-D-ribulose 5-phosphate. It functions in the pathway amino-acid biosynthesis; L-tryptophan biosynthesis; L-tryptophan from chorismate: step 3/5. The protein is N-(5'-phosphoribosyl)anthranilate isomerase of Geotalea daltonii (strain DSM 22248 / JCM 15807 / FRC-32) (Geobacter daltonii).